Consider the following 662-residue polypeptide: 72 kDa type IV collagenase (662 aa).

The signal sequence occupies residues 1–29; that stretch reads MEALGARGALAGFLRALCVLGCLLGRATA. Positions 30 to 109 are cleaved as a propeptide — activation peptide; it reads PPSPVIKFPG…PRCGNPDVAN (80 aa). A Cysteine switch motif is present at residues 100–107; it reads PRCGNPDV. Cys102 is a Zn(2+) binding site. Residues 110–221 form a collagenase-like 1 region; sequence YNFFPRKPKW…LWTLGEGQVV (112 aa). Ca(2+) contacts are provided by Asp134 and Asp168. 2 residues coordinate Zn(2+): His178 and Asp180. Residues Asp185 and Gly186 each coordinate Ca(2+). His193 contributes to the Zn(2+) binding site. Residues Gly200, Gly202, and Asp204 each coordinate Ca(2+). Residue His206 coordinates Zn(2+). 3 residues coordinate Ca(2+): Asp208, Asp209, and Glu211. Residues 222–396 are collagen-binding; the sequence is RVKYGNADGE…WGFCPDQGYS (175 aa). Fibronectin type-II domains are found at residues 228–276, 286–334, and 344–392; these read ADGE…FCPH, ADGQ…FCPE, and SEGA…FCPD. 6 cysteine pairs are disulfide-bonded: Cys233-Cys259, Cys247-Cys274, Cys291-Cys317, Cys305-Cys332, Cys349-Cys375, and Cys363-Cys390. Residues 397–467 are collagenase-like 2; that stretch reads LFLVAAHEFG…GPTPTLGPVT (71 aa). His403 serves as a coordination point for Zn(2+). Glu404 is an active-site residue. His407 and His413 together coordinate Zn(2+). The interval 414 to 662 is required for inhibitor TIMP2 binding; that stretch reads SQDPGALMAP…GSIKTDWLGC (249 aa). Residues Cys471 and Cys662 are joined by a disulfide bond. Hemopexin repeat units lie at residues 474–518, 519–565, 567–615, and 616–662; these read DIVF…WPEL, PEKI…GLPP, VQRV…WNAI, and PDHL…WLGC. The Ca(2+) site is built by Asp478, Asp523, and Asp571. Residue Asn575 is glycosylated (N-linked (GlcNAc...) asparagine). Asp620 contributes to the Ca(2+) binding site. Asn644 carries an N-linked (GlcNAc...) asparagine glycan.

This sequence belongs to the peptidase M10A family. In terms of assembly, interacts (via the C-terminal hemopexin-like domains-containing region) with the integrin alpha-V/beta-3; the interaction promotes vascular invasion in angiogenic vessels and melamoma cells. Interacts (via the C-terminal PEX domain) with TIMP2 (via the C-terminal); the interaction inhibits the degradation activity. Interacts with GSK3B. Ca(2+) serves as cofactor. It depends on Zn(2+) as a cofactor. Phosphorylation on multiple sites modulates enzymatic activity. Phosphorylated by PKC in vitro. In terms of processing, the propeptide is processed by MMP14 (MT-MMP1) and MMP16 (MT-MMP3). Autocatalytic cleavage in the C-terminal produces the anti-angiogenic peptide, PEX. This processing appears to be facilitated by binding integrinv/beta3.

Its subcellular location is the secreted. The protein localises to the extracellular space. It is found in the extracellular matrix. It localises to the membrane. The protein resides in the nucleus. The enzyme catalyses Cleavage of gelatin type I and collagen types IV, V, VII, X. Cleaves the collagen-like sequence Pro-Gln-Gly-|-Ile-Ala-Gly-Gln.. Functionally, ubiquitinous metalloproteinase that is involved in diverse functions such as remodeling of the vasculature, angiogenesis, tissue repair, tumor invasion, inflammation, and atherosclerotic plaque rupture. As well as degrading extracellular matrix proteins, can also act on several nonmatrix proteins such as big endothelial 1 and beta-type CGRP promoting vasoconstriction. Also cleaves KISS at a Gly-|-Leu bond. Appears to have a role in myocardial cell death pathways. Contributes to myocardial oxidative stress by regulating the activity of GSK3beta. Cleaves GSK3beta in vitro. Involved in the formation of the fibrovascular tissues. In terms of biological role, PEX, the C-terminal non-catalytic fragment of MMP2, possesses anti-angiogenic and anti-tumor properties and inhibits cell migration and cell adhesion to FGF2 and vitronectin. Ligand for integrin alpha-v/beta-3 on the surface of blood vessels. The sequence is that of 72 kDa type IV collagenase (MMP2) from Oryctolagus cuniculus (Rabbit).